The primary structure comprises 326 residues: Adenosine receptor A1 (326 aa).

Residues 1 to 10 (MPPSISAFQA) lie on the Extracellular side of the membrane. Residues 11 to 33 (AYIGIEVLIALVSVPGNVLVIWA) form a helical membrane-spanning segment. The Cytoplasmic segment spans residues 34–46 (VKVNQALRDATFC). A helical transmembrane segment spans residues 47 to 69 (FIVSLAVADVAVGALVIPLAILI). Residues 70 to 80 (NIGPQTYFHTC) lie on the Extracellular side of the membrane. A disulfide bridge links Cys80 with Cys169. Residues 81 to 102 (LMVACPVLILTQSSILALLAIA) form a helical membrane-spanning segment. The Cytoplasmic segment spans residues 103–123 (VDRYLRVKIPLRYKMVVTPRR). A helical transmembrane segment spans residues 124 to 146 (AAVAIAGCWILSFVVGLTPMFGW). The Extracellular segment spans residues 147 to 176 (NNLSAVERAWAANGSMGEPVIKCEFEKVIS). A glycan (N-linked (GlcNAc...) asparagine) is linked at Asn159. The helical transmembrane segment at 177–201 (MEYMVYFNFFVWVLPPLLLMVLIYL) threads the bilayer. Residues 202–235 (EVFYLIRKQLNKKVSASSGDPQKYYGKELKIAKS) lie on the Cytoplasmic side of the membrane. A helical transmembrane segment spans residues 236–259 (LALILFLFALSWLPLHILNCITLF). The Extracellular segment spans residues 260–267 (CPSCHKPS). The helical transmembrane segment at 268-292 (ILTYIAIFLTHGNSAMNPIVYAFRI) threads the bilayer. Topologically, residues 293 to 326 (QKFRVTFLKIWNDHFRCQPAPPIDEDLPEERPDD) are cytoplasmic. Residue Cys309 is the site of S-palmitoyl cysteine attachment.

This sequence belongs to the G-protein coupled receptor 1 family.

It is found in the cell membrane. Its function is as follows. Receptor for adenosine. The activity of this receptor is mediated by G proteins which inhibit adenylyl cyclase. This is Adenosine receptor A1 (ADORA1) from Homo sapiens (Human).